The following is a 509-amino-acid chain: Cytochrome P450 monooxygenase cpaH (509 aa).

Asparagine 15 carries N-linked (GlcNAc...) asparagine glycosylation. The chain crosses the membrane as a helical span at residues 31–51 (TTILLIGVTYCILVGIYRVTL). 2 N-linked (GlcNAc...) asparagine glycosylation sites follow: asparagine 306 and asparagine 412. Residue cysteine 453 coordinates heme.

Belongs to the cytochrome P450 family. It depends on heme as a cofactor.

It is found in the membrane. It functions in the pathway secondary metabolite biosynthesis. Cytochrome P450 monooxygenase; part of the gene cluster that mediates the biosynthesis of the fungal neurotoxin cyclopiazonic acid (CPA), a nanomolar inhibitor of Ca(2+)-ATPase with a unique pentacyclic indole tetramic acid scaffold. The hybrid two module polyketide synthase-nonribosomal peptide synthetase (PKS-NRPS) cpaS incorporates acetyl-CoA, malonyl-CoA, and tryptophan (Trp) and utilizes a C-terminal redox-incompetent reductase domain to make and release the tryptophan tetramic acid, cyclo-acetoacetyl-L-tryptophan (c-AATrp), as the first intermediate in the pathway. CpaS catalyzes a Dieckmann-type cyclization on the N-acetoacetyl-Trp intermediate bound in thioester linkage to the phosphopantetheinyl arm of the T domain to form and release c-AATrp. CpaD then regiospecifically dimethylallylates c-AATrp to form beta-cyclopiazonic acid. CpaD discriminates against free Trp but accepts tryptophan-containing thiohydantoins, diketopiperazines, and linear peptides as substrates for C4-prenylation and also acts as a regiospecific O-dimethylallyltransferase (DMAT) on a tyrosine-derived tetramic acid. The beta-cyclopiazonate dehydrogenase cpaO then carries out the dehydrogenation of beta-CPA to yield an unstable enimine product, which is captured by intramolecular cyclization to create the pentacyclic fused scaffold of alpha-cyclopiazonate. Finally, the cytochrome P450 monooxygenase cpaH mediates the conversion of CPA into the less toxic 2-oxocyclopiazonic acid, the end product of the CPA pathway in A.oryza. In Aspergillus oryzae (Yellow koji mold), this protein is Cytochrome P450 monooxygenase cpaH.